We begin with the raw amino-acid sequence, 410 residues long: Multifunctional CCA protein (410 aa).

2 residues coordinate ATP: Gly8 and Arg11. CTP is bound by residues Gly8 and Arg11. Mg(2+) is bound by residues Asp21 and Asp23. ATP is bound by residues Arg91, Arg137, and Arg140. Positions 91, 137, and 140 each coordinate CTP. The region spanning 225–326 (SGIHTLMTLQ…LNVLKKTDAF (102 aa)) is the HD domain.

It belongs to the tRNA nucleotidyltransferase/poly(A) polymerase family. Bacterial CCA-adding enzyme type 1 subfamily. Monomer. Can also form homodimers and oligomers. Mg(2+) is required as a cofactor. Requires Ni(2+) as cofactor.

It catalyses the reaction a tRNA precursor + 2 CTP + ATP = a tRNA with a 3' CCA end + 3 diphosphate. It carries out the reaction a tRNA with a 3' CCA end + 2 CTP + ATP = a tRNA with a 3' CCACCA end + 3 diphosphate. Functionally, catalyzes the addition and repair of the essential 3'-terminal CCA sequence in tRNAs without using a nucleic acid template. Adds these three nucleotides in the order of C, C, and A to the tRNA nucleotide-73, using CTP and ATP as substrates and producing inorganic pyrophosphate. tRNA 3'-terminal CCA addition is required both for tRNA processing and repair. Also involved in tRNA surveillance by mediating tandem CCA addition to generate a CCACCA at the 3' terminus of unstable tRNAs. While stable tRNAs receive only 3'-terminal CCA, unstable tRNAs are marked with CCACCA and rapidly degraded. The chain is Multifunctional CCA protein from Neisseria gonorrhoeae (strain ATCC 700825 / FA 1090).